A 179-amino-acid chain; its full sequence is Large ribosomal subunit protein uL5 (179 aa).

It belongs to the universal ribosomal protein uL5 family. Part of the 50S ribosomal subunit; part of the 5S rRNA/L5/L18/L25 subcomplex. Contacts the 5S rRNA and the P site tRNA. Forms a bridge to the 30S subunit in the 70S ribosome.

Its function is as follows. This is one of the proteins that bind and probably mediate the attachment of the 5S RNA into the large ribosomal subunit, where it forms part of the central protuberance. In the 70S ribosome it contacts protein S13 of the 30S subunit (bridge B1b), connecting the 2 subunits; this bridge is implicated in subunit movement. Contacts the P site tRNA; the 5S rRNA and some of its associated proteins might help stabilize positioning of ribosome-bound tRNAs. This is Large ribosomal subunit protein uL5 from Haemophilus ducreyi (strain 35000HP / ATCC 700724).